Reading from the N-terminus, the 300-residue chain is Formate dehydrogenase-O iron-sulfur subunit (300 aa).

Topologically, residues 1-260 (MAYQSQDIIR…KFWKGIWKPL (260 aa)) are cytoplasmic. 4 consecutive 4Fe-4S ferredoxin-type domains span residues 30–60 (VAKLIDVTTCIGCKACQVACSEWNDIRDTVG), 91–123 (LEWLIRKDGCMHCSDPGCLKACPAEGAIIQYAN), 124–153 (GIVDFQSEQCIGCGYCIAGCPFDIPRLNPE), and 158–189 (YKCTLCVDRVVVGQEPACVKTCPTGAIHFGTK). Positions 39, 42, 45, 49, 100, 103, 108, 112, 133, 136, 139, 143, 160, 163, 175, and 179 each coordinate [4Fe-4S] cluster. Residues 261–279 (AAVGFAATFAASIFHYVGV) form a helical membrane-spanning segment. At 280 to 300 (GPNRADEEENNLHEEKDEERK) the chain is on the periplasmic side.

In terms of assembly, formate dehydrogenase is a membrane-bound complex, formed by subunits alpha, beta and gamma. [4Fe-4S] cluster is required as a cofactor.

It is found in the cell membrane. Allows to use formate as major electron donor during aerobic respiration. The beta chain is an electron transfer unit containing 4 cysteine clusters involved in the formation of iron-sulfur centers. Electrons are transferred from the gamma chain to the molybdenum cofactor of the alpha subunit. The chain is Formate dehydrogenase-O iron-sulfur subunit (fdoH) from Escherichia coli (strain K12).